The following is a 948-amino-acid chain: Coiled-coil domain-containing protein 66 (948 aa).

Phosphothreonine is present on residues threonine 115 and threonine 121. Position 369 is a phosphoserine (serine 369). The tract at residues 458-499 (DRRRQKQLEHQKAITAQVEEKRRKKQLEEEQRKKEEQEEELR) is disordered. Residues 467-558 (HQKAITAQVE…EQRIRELAQK (92 aa)) are a coiled coil. The tract at residues 570 to 948 (GVDTIQMEYN…NQEESFGSSF (379 aa)) is mediates localization to cilia, centrosomes and spindle microtubules and the interaction with PCM1, CEP290, CEP104 and CSPP1. Serine 606 carries the phosphoserine modification. 2 disordered regions span residues 690-713 (QTKH…KRYI) and 788-808 (SFSK…RTQQ).

As to quaternary structure, homodimer; disulfide-linked. Interacts with CEP290. Interacts with PCM1. Interacts with ARMC9, TOGARAM1, CSPP1 and CEP104. Interacts with CDK5RAP2, CEP152, CEP192, TBG1 and PRC1. As to expression, widely expressed (at protein level). Expressed in retina, mainly in photoreceptors but also in outer plexiform and ganglion cell layers (at protein level).

The protein localises to the cytoplasm. Its subcellular location is the cytoskeleton. The protein resides in the microtubule organizing center. It is found in the centrosome. It localises to the centriolar satellite. The protein localises to the cell projection. Its subcellular location is the cilium. The protein resides in the cilium basal body. It is found in the cilium axoneme. It localises to the photoreceptor inner segment. The protein localises to the photoreceptor outer segment. Its subcellular location is the spindle. The protein resides in the midbody. Its function is as follows. Microtubule-binding protein required for ciliogenesis. May function in ciliogenesis by mediating the transport of proteins like BBS4 to the cilium, but also through the organization of the centriolar satellites. Required for the assembly of signaling-competent cilia with proper structure and length. Mediates this function in part by regulating transition zone assembly and basal body recruitment of the IFT-B complex. Cooperates with the ciliopathy proteins CSPP1 and CEP104 during cilium length regulation. Plays two important roles during cell division. First, is required for mitotic progression via regulation of spindle assembly, organization and orientation, levels of spindle microtubules (MTs), kinetochore-fiber integrity, and chromosome alignment. Second, functions during cytokinesis in part by regulating assembly and organization of central spindle and midbody MTs. Plays a role in retina morphogenesis and/or homeostasis. In Homo sapiens (Human), this protein is Coiled-coil domain-containing protein 66.